We begin with the raw amino-acid sequence, 203 residues long: SOSS complex subunit B1 (203 aa).

A DNA-binding region (OB) is located at residues 22 to 92; it reads IVLETGRVTK…TLYTGRGGDL (71 aa). The segment at 111 to 203 is disordered; it reads PNPEYIAQQS…GKEPRRTGKR (93 aa). The span at 117–128 shows a compositional bias: polar residues; it reads AQQSQNKQAQAE. Low complexity predominate over residues 129–140; the sequence is SGTGTNSHNSSS. Over residues 149–182 the composition is skewed to polar residues; it reads ENGNGSNSSGPPTHQSTAPTHSTSGRITRSQPNH.

The protein belongs to the SOSS-B family. SOSS-B1 subfamily. As to quaternary structure, component of the SOSS complex, composed of soss-b (soss-b1/nabp2 or soss-b2/nabp1), soss-a/ints3 and soss-c/inip. SOSS complexes containing soss-b1/nabp2 are more abundant than complexes containing soss-b2/nabp1.

It localises to the nucleus. Component of the SOSS complex, a multiprotein complex that functions downstream of the MRN complex to promote DNA repair and G2/M checkpoint. In the SOSS complex, acts as a sensor of single-stranded DNA that binds to single-stranded DNA. The SOSS complex associates with DNA lesions and influences diverse endpoints in the cellular DNA damage response including cell-cycle checkpoint activation, recombinational repair and maintenance of genomic stability. Required for efficient homologous recombination-dependent repair of double-strand breaks (DSBs). This is SOSS complex subunit B1 (nabp2) from Xenopus tropicalis (Western clawed frog).